Reading from the N-terminus, the 1043-residue chain is Non-canonical nonribosomal peptide synthetase cpsA (1043 aa).

Residues 41–386 (RRAQENPSAP…IGGDGVSPGY (346 aa)) are adenylation (A) domain. Residues 549–626 (QDASTTISRL…QMARYVDEGG (78 aa)) form the Carrier domain. O-(pantetheine 4'-phosphoryl)serine is present on Ser586. Residues 671 to 914 (MTGATGFVGA…FVPVDYLVDA (244 aa)) form a short-chain dehydrogenase/reductase (R) domain region. The Thioester reductase (TE) domain maps to 672–915 (TGATGFVGAF…VPVDYLVDAI (244 aa)).

This sequence belongs to the NRP synthetase family. Requires pantetheine 4'-phosphate as cofactor.

It carries out the reaction L-valine + ATP + NADPH + H(+) = L-valinal + AMP + diphosphate + NADP(+). The enzyme catalyses L-tryptophan + ATP + NADPH + H(+) = L-tryptophanal + AMP + diphosphate + NADP(+). It participates in alkaloid biosynthesis. Functionally, non-canonical nonribosomal peptide synthetase; part of the gene cluster that mediates the biosynthesis of campesine G, a dimeric indole piperazine alkaloid that shows good insecticidal activity Galleria mellonella. CpsA catalyzes the first steps of the pathway by producing L-tryptophanal and L-valinal from their respective amino-acids. These products condensate spontaneously to form trypyl-valyl pyrazine also known as didehydrocampesine A. The NmrA-like family domain-containing oxidoreductase cpsB is the next enzyme in cps pathway and reduces the unstable didehydrocampesine A to campesine A. The methyltransferase cpsF and the acetyltransferase cpsE both recognize N13 of piperazine ring to carry out methylation and acetylation of campesine A to produce campesine C and B, respectively. The cytochrome P450 monooxygenase cpsD then acts as a dimerase that catalyzes oxidative heterocoupling between campesine B and C to produce heterodimers with unexpected 6/5/6/6/6/6/5/6 eight-ring scaffold called campesine D. Finally,the cytochrome P450 monooxygenase cpsC is a regioselective dehydrogenase that catalyzes dehydrogenation reaction towards C2-N1 to produce campesine G. The protein is Non-canonical nonribosomal peptide synthetase cpsA of Aspergillus campestris (strain IBT 28561).